Here is a 178-residue protein sequence, read N- to C-terminus: Ribonuclease M5 (178 aa).

One can recognise a Toprim domain in the interval 4-100 (NEFIVVEGRD…KIGVEHADLI (97 aa)). Mg(2+)-binding residues include E10, D56, and D58.

It belongs to the ribonuclease M5 family. The cofactor is Mg(2+).

Its subcellular location is the cytoplasm. The enzyme catalyses Endonucleolytic cleavage of RNA, removing 21 and 42 nucleotides, respectively, from the 5'- and 3'-termini of a 5S-rRNA precursor.. In terms of biological role, required for correct processing of both the 5' and 3' ends of 5S rRNA precursor. Cleaves both sides of a double-stranded region yielding mature 5S rRNA in one step. The polypeptide is Ribonuclease M5 (Staphylococcus aureus (strain NCTC 8325 / PS 47)).